We begin with the raw amino-acid sequence, 114 residues long: Large ribosomal subunit protein bL19 (114 aa).

This sequence belongs to the bacterial ribosomal protein bL19 family.

Functionally, this protein is located at the 30S-50S ribosomal subunit interface and may play a role in the structure and function of the aminoacyl-tRNA binding site. This chain is Large ribosomal subunit protein bL19, found in Lysinibacillus sphaericus (strain C3-41).